Here is a 124-residue protein sequence, read N- to C-terminus: Ribonuclease pancreatic (124 aa).

Basic and acidic residues predominate over residues 1–13 (KESAAAKFERQHM). The interval 1–24 (KESAAAKFERQHMDSSTSSASSSN) is disordered. Substrate-binding residues include Lys-7 and Arg-10. The Proton acceptor role is filled by His-12. Intrachain disulfides connect Cys-26-Cys-84, Cys-40-Cys-95, Cys-58-Cys-110, and Cys-65-Cys-72. A glycan (N-linked (GlcNAc...) asparagine; partial) is linked at Asn-34. Residues 41-45 (KPVNT), Lys-66, and Arg-85 contribute to the substrate site. Residue His-119 is the Proton donor of the active site.

This sequence belongs to the pancreatic ribonuclease family. In terms of assembly, monomer. Interacts with and forms tight 1:1 complexes with RNH1. Dimerization of two such complexes may occur. Interaction with RNH1 inhibits this protein. Pancreas.

The protein resides in the secreted. The catalysed reaction is an [RNA] containing cytidine + H2O = an [RNA]-3'-cytidine-3'-phosphate + a 5'-hydroxy-ribonucleotide-3'-[RNA].. The enzyme catalyses an [RNA] containing uridine + H2O = an [RNA]-3'-uridine-3'-phosphate + a 5'-hydroxy-ribonucleotide-3'-[RNA].. Endonuclease that catalyzes the cleavage of RNA on the 3' side of pyrimidine nucleotides. Acts on single-stranded and double-stranded RNA. The polypeptide is Ribonuclease pancreatic (RNASE1) (Ovis aries (Sheep)).